Here is a 346-residue protein sequence, read N- to C-terminus: Elongation factor Ts (346 aa).

Positions 80 to 83 (TDFV) are involved in Mg(2+) ion dislocation from EF-Tu.

The protein belongs to the EF-Ts family.

The protein localises to the cytoplasm. Associates with the EF-Tu.GDP complex and induces the exchange of GDP to GTP. It remains bound to the aminoacyl-tRNA.EF-Tu.GTP complex up to the GTP hydrolysis stage on the ribosome. The sequence is that of Elongation factor Ts from Streptococcus uberis (strain ATCC BAA-854 / 0140J).